The following is a 617-amino-acid chain: Kelch-like protein 9 (617 aa).

A BTB domain is found at 50–119; the sequence is CDVTLVPGDG…IYTAKLSLNM (70 aa). Residues 154 to 255 enclose the BACK domain; it reads CVEVGRIANT…TPQDLINYVQ (102 aa). Kelch repeat units follow at residues 299–347, 348–399, 400–446, 448–493, 495–545, and 546–594; these read HLVT…VIGN, FLYV…ALKG, HLYA…VYGG, MYIS…TVGD, LYVI…VFEN, and KIYV…TLTV. The tract at residues 595-617 is disordered; it reads FPPEENPGSPSRESPLSAPSDHS.

Component of the BCR(KLHL9-KLHL13) E3 ubiquitin ligase complex, at least composed of CUL3, KLHL9, KLHL13 and RBX1. Interacts with AURKB.

It functions in the pathway protein modification; protein ubiquitination. Its function is as follows. Substrate-specific adapter of a BCR (BTB-CUL3-RBX1) E3 ubiquitin-protein ligase complex required for mitotic progression and cytokinesis. The BCR(KLHL9-KLHL13) E3 ubiquitin ligase complex mediates the ubiquitination of AURKB and controls the dynamic behavior of AURKB on mitotic chromosomes and thereby coordinates faithful mitotic progression and completion of cytokinesis. This chain is Kelch-like protein 9 (Klhl9), found in Mus musculus (Mouse).